Here is a 283-residue protein sequence, read N- to C-terminus: Pantothenate synthetase (283 aa).

Position 30 to 37 (30 to 37) interacts with ATP; sequence MGNLHAGH. His37 functions as the Proton donor in the catalytic mechanism. Gln61 serves as a coordination point for (R)-pantoate. Residue Gln61 coordinates beta-alanine. 149 to 152 is an ATP binding site; that stretch reads GEKD. Gln155 is a binding site for (R)-pantoate. Residues Leu178 and 186-189 contribute to the ATP site; that span reads MSSR.

Belongs to the pantothenate synthetase family. Homodimer.

It localises to the cytoplasm. The catalysed reaction is (R)-pantoate + beta-alanine + ATP = (R)-pantothenate + AMP + diphosphate + H(+). It participates in cofactor biosynthesis; (R)-pantothenate biosynthesis; (R)-pantothenate from (R)-pantoate and beta-alanine: step 1/1. Catalyzes the condensation of pantoate with beta-alanine in an ATP-dependent reaction via a pantoyl-adenylate intermediate. This Hahella chejuensis (strain KCTC 2396) protein is Pantothenate synthetase.